We begin with the raw amino-acid sequence, 387 residues long: Cyclin-J-like protein (387 aa).

Residues 13-142 enclose the Cyclin N-terminal domain; sequence DVHCTLREKE…LLEAFSWDLC (130 aa).

Belongs to the cyclin family. Cyclin J subfamily.

The sequence is that of Cyclin-J-like protein (Ccnjl) from Mus musculus (Mouse).